Reading from the N-terminus, the 219-residue chain is Probable GTP-binding protein EngB (219 aa).

The region spanning 31–205 (VGVEIAFAGR…LSILNEWCHP (175 aa)) is the EngB-type G domain. Residues 39–46 (GRSNAGKS), 66–70 (GRTQL), 84–87 (DLPG), 151–154 (TKSD), and 184–186 (FSA) each bind GTP. Positions 46 and 68 each coordinate Mg(2+).

It belongs to the TRAFAC class TrmE-Era-EngA-EngB-Septin-like GTPase superfamily. EngB GTPase family. The cofactor is Mg(2+).

Its function is as follows. Necessary for normal cell division and for the maintenance of normal septation. The polypeptide is Probable GTP-binding protein EngB (Shewanella sp. (strain MR-7)).